A 133-amino-acid polypeptide reads, in one-letter code: Ribosome-binding factor A (133 aa).

It belongs to the RbfA family. In terms of assembly, monomer. Binds 30S ribosomal subunits, but not 50S ribosomal subunits or 70S ribosomes.

The protein resides in the cytoplasm. Its function is as follows. One of several proteins that assist in the late maturation steps of the functional core of the 30S ribosomal subunit. Associates with free 30S ribosomal subunits (but not with 30S subunits that are part of 70S ribosomes or polysomes). Required for efficient processing of 16S rRNA. May interact with the 5'-terminal helix region of 16S rRNA. In Cytophaga hutchinsonii (strain ATCC 33406 / DSM 1761 / CIP 103989 / NBRC 15051 / NCIMB 9469 / D465), this protein is Ribosome-binding factor A.